The chain runs to 342 residues: Glucokinase (342 aa).

ATP is bound at residue 15 to 20 (GDVGGT).

Belongs to the bacterial glucokinase family.

Its subcellular location is the cytoplasm. The catalysed reaction is D-glucose + ATP = D-glucose 6-phosphate + ADP + H(+). In Ralstonia nicotianae (strain ATCC BAA-1114 / GMI1000) (Ralstonia solanacearum), this protein is Glucokinase.